The chain runs to 706 residues: Axin-related protein (706 aa).

The RGS domain maps to 72 to 191 (SLNLLLDDQD…LQSDICKEYA (120 aa)). Disordered regions lie at residues 278–298 (MTDGSVDGIPPYRSKKQREIH), 400–482 (TPAN…GTSA), and 585–605 (STTLKEKGKTAESVPSSGFST). Polar residues predominate over residues 402 to 412 (ANLSPRSQSPF). Low complexity predominate over residues 453-462 (RSSVSSQLPR). Residues 624-706 (GQGLAIVYYF…KIICKVERAC (83 aa)) form the DIX domain.

As to quaternary structure, interacts with dvl2/dsh via DIX domains in both proteins. Forms a complex with ctnnb1/beta-catenin and gsk3b. Also forms heterodimers with mouse Axin1.

Its subcellular location is the cytoplasm. It is found in the cytoplasmic vesicle. Functionally, regulates the wnt signaling pathway by interacting with dvl2/dsh, which displaces gsk3b from the axnr-gsk3b complex and thus prevents degradation of ctnnb1/beta-catenin. In Xenopus laevis (African clawed frog), this protein is Axin-related protein.